Consider the following 314-residue polypeptide: Methionyl-tRNA formyltransferase (314 aa).

A (6S)-5,6,7,8-tetrahydrofolate-binding site is contributed by 113–116 (SLLP).

It belongs to the Fmt family.

It catalyses the reaction L-methionyl-tRNA(fMet) + (6R)-10-formyltetrahydrofolate = N-formyl-L-methionyl-tRNA(fMet) + (6S)-5,6,7,8-tetrahydrofolate + H(+). In terms of biological role, attaches a formyl group to the free amino group of methionyl-tRNA(fMet). The formyl group appears to play a dual role in the initiator identity of N-formylmethionyl-tRNA by promoting its recognition by IF2 and preventing the misappropriation of this tRNA by the elongation apparatus. This is Methionyl-tRNA formyltransferase from Stutzerimonas stutzeri (strain A1501) (Pseudomonas stutzeri).